We begin with the raw amino-acid sequence, 178 residues long: 5,6,7,8-tetrahydromethanopterin hydro-lyase (178 aa).

Residue histidine 33 is the Proton donor of the active site. Substrate-binding residues include aspartate 35, leucine 64, lysine 82, threonine 84, and glutamine 99.

It belongs to the formaldehyde-activating enzyme family.

It is found in the cytoplasm. The catalysed reaction is 5,6,7,8-tetrahydromethanopterin + formaldehyde = 5,10-methylenetetrahydromethanopterin + H2O. Functionally, catalyzes the condensation of formaldehyde with tetrahydromethanopterin (H(4)MPT) to 5,10-methylenetetrahydromethanopterin. The chain is 5,6,7,8-tetrahydromethanopterin hydro-lyase (faeA) from Methanosarcina barkeri (strain Fusaro / DSM 804).